The chain runs to 2508 residues: Male gametocyte surface protein P230p (2508 aa).

Positions Met1–Tyr34 are cleaved as a signal peptide. N-linked (GlcNAc...) asparagine glycosylation is found at Asn230, Asn254, Asn362, and Asn414. The 123-residue stretch at Lys394–Asp516 folds into the 6-Cys 1 domain. Cys443 and Cys493 are oxidised to a cystine. N-linked (GlcNAc...) asparagine glycosylation is found at Asn601 and Asn674. 5 consecutive 6-Cys domains span residues Ser676–Arg800, Ile831–Phe1096, Pro1099–Asn1231, Lys1268–His1428, and Lys1433–Ile1565. Cys680 and Cys700 are oxidised to a cystine. N-linked (GlcNAc...) asparagine glycosylation occurs at Asn703. Intrachain disulfides connect Cys714–Cys775 and Cys725–Cys773. N-linked (GlcNAc...) asparagine glycans are attached at residues Asn779, Asn849, Asn986, Asn995, Asn1065, and Asn1074. Disulfide bonds link Cys835–Cys856 and Cys871–Cys1072. Disulfide bonds link Cys1103/Cys1129, Cys1144/Cys1206, and Cys1157/Cys1204. Residue Asn1231 is glycosylated (N-linked (GlcNAc...) asparagine). 5 disulfide bridges follow: Cys1272–Cys1293, Cys1308–Cys1404, Cys1437–Cys1464, Cys1478–Cys1547, and Cys1488–Cys1545. The N-linked (GlcNAc...) asparagine glycan is linked to Asn1385. Residues Asn1525, Asn1550, Asn1567, Asn1750, Asn1755, and Asn1788 are each glycosylated (N-linked (GlcNAc...) asparagine). 6-Cys domains are found at residues Lys1656 to Asn1804 and Lys1807 to Asp1984. A disulfide bridge connects residues Cys1704 and Cys1782. Intrachain disulfides connect Cys1811–Cys1883, Cys1897–Cys1966, and Cys1908–Cys1964. N-linked (GlcNAc...) asparagine glycans are attached at residues Asn2016 and Asn2047. Positions Ser2081 to Ile2113 are disordered. Over residues Asp2082–Asn2112 the composition is skewed to acidic residues. N-linked (GlcNAc...) asparagine glycans are attached at residues Asn2143, Asn2211, Asn2239, and Asn2255. 2 6-Cys domains span residues Ile2197–Asn2354 and Lys2357–Tyr2481. Disulfide bonds link Cys2361/Cys2386, Cys2400/Cys2461, and Cys2411/Cys2459.

Its subcellular location is the cell surface. It localises to the cell membrane. Its function is as follows. Plays an essential role in male gamete fertility. Required for the binding to erythrocytes and thus, for the formation of exflagellation centers. The sequence is that of Male gametocyte surface protein P230p (PFS230P) from Plasmodium falciparum (isolate 3D7).